The following is a 445-amino-acid chain: MLSNIVKKTIQSSKNLKSLVLNKSTSSLVYQKRFLNVHEYQAQKMMKSYGINCPVGNVAETPEEAEKIAEVMNTQDLVVKAQVLAGGRGKGIFTSGLKGGVQLCSSAEDVKKFASKMLGHTLVTKQTGEDGKVVHQVYVTERHFLRKEMYFAILMDRKAGGPVMVASPEGGVDIEGVARDNPSAIFKEPIDIMIGVQPEQTKRLAEKLGFSKKNISMAQDQMKKLYDFFIKNDCTLVEINPLAETASGDVLCMDAKLNFDDNAAFRHPDIFKLRDKSQEDPREVKAAEFDLNYIGLDGNIGCLVNGAGLAMASMDIIKLYGGSPANFLDVGGGATQKQVTEAIKLISSDKKVKSILVNIFGGIMKCDVIALGIIAALKELSIATPLVVRLQGTNVEAAKKIMEDSGLRLIAADNLDDAAQKSVRIAEIVSLAEKSDLEISFKLPL.

A mitochondrion-targeting transit peptide spans Met-1–Lys-17. An ATP-grasp domain is found at Gln-43–Ile-270. Residues Lys-80 and Gly-87–Gly-89 each bind ATP. The Mg(2+) site is built by Asn-240 and Asp-254. Substrate-binding positions include Asn-305 and Gly-362–Met-364.

The protein belongs to the succinate/malate CoA ligase beta subunit family. ATP-specific subunit beta subfamily. In terms of assembly, heterodimer of an alpha and a beta subunit. The beta subunit determines specificity for ATP. The cofactor is Mg(2+).

The protein localises to the mitochondrion. The catalysed reaction is succinate + ATP + CoA = succinyl-CoA + ADP + phosphate. Its pathway is carbohydrate metabolism; tricarboxylic acid cycle; succinate from succinyl-CoA (ligase route): step 1/1. Its function is as follows. ATP-specific succinyl-CoA synthetase functions in the citric acid cycle (TCA), coupling the hydrolysis of succinyl-CoA to the synthesis of ATP and thus represents the only step of substrate-level phosphorylation in the TCA. The beta subunit provides nucleotide specificity of the enzyme and binds the substrate succinate, while the binding sites for coenzyme A and phosphate are found in the alpha subunit. This is Succinate--CoA ligase [ADP-forming] subunit beta, mitochondrial (scsC) from Dictyostelium discoideum (Social amoeba).